A 410-amino-acid polypeptide reads, in one-letter code: Gamma-glutamyl phosphate reductase (410 aa).

Belongs to the gamma-glutamyl phosphate reductase family.

It localises to the cytoplasm. The catalysed reaction is L-glutamate 5-semialdehyde + phosphate + NADP(+) = L-glutamyl 5-phosphate + NADPH + H(+). It functions in the pathway amino-acid biosynthesis; L-proline biosynthesis; L-glutamate 5-semialdehyde from L-glutamate: step 2/2. In terms of biological role, catalyzes the NADPH-dependent reduction of L-glutamate 5-phosphate into L-glutamate 5-semialdehyde and phosphate. The product spontaneously undergoes cyclization to form 1-pyrroline-5-carboxylate. The polypeptide is Gamma-glutamyl phosphate reductase (Sulfurimonas denitrificans (strain ATCC 33889 / DSM 1251) (Thiomicrospira denitrificans (strain ATCC 33889 / DSM 1251))).